A 429-amino-acid chain; its full sequence is Transcriptional adapter 3 (429 aa).

Residues 41–70 are a coiled coil; that stretch reads IEELDTLQLELETLLSSASRRLRALEEQRQ. Disordered stretches follow at residues 86-132, 208-257, and 274-308; these read KLEK…TKVQ, EERR…PFGP, and PMED…HTRS. 2 stretches are compositionally biased toward basic and acidic residues: residues 208–221 and 230–249; these read EERR…DKKK and LDAK…HEPP. Positions 364–404 form a coiled coil; it reads LLKLAREEMRKQELRQRVRVADNEVMEAFRRIMAARQKKRT.

The protein belongs to the NGG1 family.

Its subcellular location is the nucleus. In terms of biological role, functions as a component of the PCAF complex. The PCAF complex is capable of efficiently acetylating histones in a nucleosomal context. This is Transcriptional adapter 3 (tada3) from Danio rerio (Zebrafish).